The primary structure comprises 173 residues: Sialic acid TRAP transporter small permease protein SiaQ (173 aa).

4 helical membrane-spanning segments follow: residues 13 to 33 (IEEI…TWQI), 46 to 66 (SEEL…AIAI), 87 to 107 (LSLV…IIVL), and 123 to 143 (LGIS…FMVF).

Belongs to the TRAP transporter small permease family. In terms of assembly, the complex comprises the extracytoplasmic solute receptor protein SiaP, and the two transmembrane proteins SiaQ and SiaM. SiaQ and SiaM form a tight 1:1 complex.

The protein resides in the cell inner membrane. In terms of biological role, part of the tripartite ATP-independent periplasmic (TRAP) transport system SiaPQM that catalyzes unidirectional Na(+)-dependent sialic acid uptake. This Vibrio cholerae serotype O1 (strain ATCC 39315 / El Tor Inaba N16961) protein is Sialic acid TRAP transporter small permease protein SiaQ.